We begin with the raw amino-acid sequence, 406 residues long: Tryptophan synthase beta chain (406 aa).

An N6-(pyridoxal phosphate)lysine modification is found at lysine 99.

The protein belongs to the TrpB family. As to quaternary structure, tetramer of two alpha and two beta chains. Pyridoxal 5'-phosphate serves as cofactor.

It carries out the reaction (1S,2R)-1-C-(indol-3-yl)glycerol 3-phosphate + L-serine = D-glyceraldehyde 3-phosphate + L-tryptophan + H2O. It participates in amino-acid biosynthesis; L-tryptophan biosynthesis; L-tryptophan from chorismate: step 5/5. Its function is as follows. The beta subunit is responsible for the synthesis of L-tryptophan from indole and L-serine. In Sinorhizobium fredii (strain NBRC 101917 / NGR234), this protein is Tryptophan synthase beta chain.